The chain runs to 307 residues: Tyrosine recombinase XerC (307 aa).

The region spanning 6–89 (HNTLQTVNTF…TLRTFFRYLM (84 aa)) is the Core-binding (CB) domain. Residues 110–293 (RLPKALDVDQ…DFQHLAQVYD (184 aa)) form the Tyr recombinase domain. Catalysis depends on residues Arg-151, Lys-175, His-245, Arg-248, and His-271. The active-site O-(3'-phospho-DNA)-tyrosine intermediate is Tyr-280.

Belongs to the 'phage' integrase family. XerC subfamily. In terms of assembly, forms a cyclic heterotetrameric complex composed of two molecules of XerC and two molecules of XerD.

It localises to the cytoplasm. Its function is as follows. Site-specific tyrosine recombinase, which acts by catalyzing the cutting and rejoining of the recombining DNA molecules. The XerC-XerD complex is essential to convert dimers of the bacterial chromosome into monomers to permit their segregation at cell division. It also contributes to the segregational stability of plasmids. The chain is Tyrosine recombinase XerC from Alcanivorax borkumensis (strain ATCC 700651 / DSM 11573 / NCIMB 13689 / SK2).